Reading from the N-terminus, the 354-residue chain is Protein OVEREXPRESSOR OF CATIONIC PEROXIDASE 3 (354 aa).

The short motif at 63–70 (NRKGFVSS) is the Nuclear localization signal 1 element. Disordered regions lie at residues 65-98 (KGFVSSSSSSPKKNKKKSLDGADNGGGEEEEDPF) and 151-186 (TGDVDVDVDNDDDDNDDDDNDDDDDDSEEDERPTKL). Residues 154–181 (VDVDVDNDDDDNDDDDNDDDDDDSEEDE) show a composition bias toward acidic residues. The short motif at 191–198 (LKRLAYAL) is the Nuclear localization signal 2 element. The segment at 243–264 (KPPVAAPENSSPDPSPVESLSA) is disordered. A DNA-binding region (homeobox) is located at residues 286–345 (RWSAQKRVKKAHIETLEKVYRRSKRPTNAVVSSIVQVTNLPRKRVLKWFEDKRAEDGVPD). The Nuclear localization signal 3 signature appears at 293–300 (VKKAHIET).

Its subcellular location is the nucleus. In terms of biological role, may modulate chromatin structure by regulation of nucleosome assembly/disassembly. Homeodomain transcription factor that mediates jasmonic acid (JA)-mediated COI1-dependent and abscisic acid (ABA)-mediated PMR4-dependent resistance to infection by necrotrophic fungal pathogens (e.g. B.cinerea and P.cucumerina) and bacterial pathogens (e.g. P.syringae DC3000); this resistance involves at least callose deposition. Required for the P.fluorescens WCS417r-triggered JA-dependent induced systemic resistance (ISR) against both P.syringae DC3000 and H.arabidopsidis. Negative regulator of the ABA-dependent drought resistance. The polypeptide is Protein OVEREXPRESSOR OF CATIONIC PEROXIDASE 3 (Arabidopsis thaliana (Mouse-ear cress)).